The chain runs to 178 residues: MAAPLGGMFSGQQPGPPQPPPGLLGQASLLQATPGVPRTSNSTLVDELESSFEACFASLVSQDYVNGTDQEEIRTGVDQCIKKFLDIARQTECFFLQKRLQLSVQKPEQVIKEDVSELRNELQRKDALVQKHLTKLRHWQQVLEDINMQHKKPADIPQGSLAYLEQASANIPAPMKQT.

The interval 1 to 25 is disordered; that stretch reads MAAPLGGMFSGQQPGPPQPPPGLLG. Residues 109–145 are a coiled coil; it reads QVIKEDVSELRNELQRKDALVQKHLTKLRHWQQVLED.

It belongs to the Mediator complex subunit 28 family. Component of the Mediator complex, which is composed of MED1, MED4, MED6, MED7, MED8, MED9, MED10, MED11, MED12, MED13, MED13L, MED14, MED15, MED16, MED17, MED18, MED19, MED20, MED21, MED22, MED23, MED24, MED25, MED26, MED27, MED29, MED30, MED31, CCNC, CDK8 and CDC2L6/CDK11. The MED12, MED13, CCNC and CDK8 subunits form a distinct module termed the CDK8 module. Mediator containing the CDK8 module is less active than Mediator lacking this module in supporting transcriptional activation. Individual preparations of the Mediator complex lacking one or more distinct subunits have been variously termed ARC, CRSP, DRIP, PC2, SMCC and TRAP. Forms a ternary complex with NF2/merlin and GRB2. Binds to actin.

The protein localises to the nucleus. It localises to the cytoplasm. Its subcellular location is the membrane. Component of the Mediator complex, a coactivator involved in the regulated transcription of nearly all RNA polymerase II-dependent genes. Mediator functions as a bridge to convey information from gene-specific regulatory proteins to the basal RNA polymerase II transcription machinery. Mediator is recruited to promoters by direct interactions with regulatory proteins and serves as a scaffold for the assembly of a functional preinitiation complex with RNA polymerase II and the general transcription factors. May be part of a complex containing NF2/merlin that participates in cellular signaling to the actin cytoskeleton downstream of tyrosine kinase signaling pathways. This chain is Mediator of RNA polymerase II transcription subunit 28 (MED28), found in Bos taurus (Bovine).